The following is a 466-amino-acid chain: MPHSYDYDAIVIGSGPGGEGAAMGLVKQGARVAVIERYQNVGGGCTHWGTIPSKALRHAVSRIIEFNQNPLYSDHSRLLRSSFADILNHADNVINQQTRMRQGFYERNHCEILQGNARFVDEHTLALDCPDGSVETLTAEKFVIACGSRPYHPTDVDFTHPRIYDSDSILSMHHEPRHVLIYGAGVIGCEYASIFRGMDVKVDLINTRDRLLAFLDQEMSDSLSYHFWNSGVVIRHNEEYEKIESCDDGVIMHLKSGKKLKADCLLYANGRTGNTDSLALQNIGLETDSRGQLKVNSMYQTAQPHVYAVGDVIGYPSLASAAYDQGRIAAQALVKGEATAHLIEDIPTGIYTIPEISSVGKTEQQLTAMKVPYEVGRAQFKHLARAQIVGMNVGTLKILFHRETKEILGIHCFGERAAEIIHIGQAIMEQKGGGNTIEYFVNTTFNYPTMAEAYRVAALNGLNRLF.

FAD is bound at residue 36–45 (ERYQNVGGGC).

This sequence belongs to the class-I pyridine nucleotide-disulfide oxidoreductase family. As to quaternary structure, homooligomer; probable homooctamer. FAD serves as cofactor.

It localises to the cytoplasm. It catalyses the reaction NAD(+) + NADPH = NADH + NADP(+). Its function is as follows. Conversion of NADPH, generated by peripheral catabolic pathways, to NADH, which can enter the respiratory chain for energy generation. The protein is Soluble pyridine nucleotide transhydrogenase of Shigella flexneri.